Here is a 918-residue protein sequence, read N- to C-terminus: Band 3 anion exchange protein (918 aa).

Residues 1-48 are disordered; the sequence is MENDLSFGEDVMSYEEESDSAFPSPIRPTPPGHSGNYDLEQSRQEEDS. At 1 to 392 the chain is on the cytoplasmic side; the sequence is MENDLSFGED…ISDFTDALDP (392 aa). Residues 393-416 traverse the membrane as a helical segment; the sequence is QVLAAVIFIYFAALSPAITFGGLL. The Extracellular portion of the chain corresponds to 417–424; the sequence is ADKTEHMM. A helical transmembrane segment spans residues 425 to 445; the sequence is GVSELMISTCVQGIIFAFIAA. Residues 446–448 lie on the Cytoplasmic side of the membrane; it reads QPT. Residues 449-465 traverse the membrane as a discontinuously helical segment; the sequence is LVIGFSGPLLVFEEAFF. The Extracellular segment spans residues 466-474; that stretch reads AFCKSQEIE. The helical transmembrane segment at 475–495 threads the bilayer; that stretch reads YIVGRIWVGLWLVIIVVVIVA. Residues 496-507 are Cytoplasmic-facing; it reads VEGSFLVKFISR. Residues 508–530 form a helical membrane-spanning segment; it reads FTQEIFSILISLIFIYETFSKLG. Residues 531 to 583 lie on the Extracellular side of the membrane; it reads KIFKAHPLVLNYEHLNDSLDNPFHPVVKEHIEYHEDGNKTVHEVIHERAYPNT. N546 and N568 each carry an N-linked (GlcNAc...) asparagine glycan. A helical transmembrane segment spans residues 584–604; sequence ALLSMCLMFGCFFIAYFLRQF. The Cytoplasmic segment spans residues 605–615; sequence KNGHFLPGPIR. A helical transmembrane segment spans residues 616-636; it reads RMIGDFGVPIAIFFMIAVDIT. At 637–676 the chain is on the extracellular side; sequence IEDAYTQKLVVPKGLMVSNPNARGWFINPLGEKKPFPAWM. The helical transmembrane segment at 677–697 threads the bilayer; it reads MGACCVPALLVFILIFLESQI. The Cytoplasmic segment spans residues 698–713; it reads TTLIVSKPERKMVKGS. The chain crosses the membrane as a helical span at residues 714-732; sequence GFHLDLLILVTMGGIASLF. Residues 733 to 750 traverse the membrane as a discontinuously helical segment; it reads GVPWLSAATVRSVTHANA. At 751-769 the chain is on the cytoplasmic side; it reads LTVMSKGPKPEIEKVLEQR. 2 helical membrane passes run 770–790 and 791–809; these read ISGM…PILK and MIPM…ITSL. The Cytoplasmic segment spans residues 810–847; that stretch reads SGIQMWDRMLLLIVPRKYYPADAYAQRVTTMKMHLFTL. The segment at residues 848-878 is an intramembrane region (discontinuously helical); that stretch reads IQMVCLGALWMVKMSAFSLALPFVLILTIPL. C852 is lipidated: S-palmitoyl cysteine. Topologically, residues 879 to 918 are cytoplasmic; sequence RMAITGTLFTDKEMKCLDASDGKVKFEEEPGEDMYESPLP.

It belongs to the anion exchanger (TC 2.A.31) family. A dimer in solution, it spans the membrane asymmetrically and appears to be tetrameric.

The protein localises to the cell membrane. It catalyses the reaction hydrogencarbonate(in) + chloride(out) = hydrogencarbonate(out) + chloride(in). Functionally, functions both as a transporter that mediates electroneutral anion exchange across the cell membrane and as a structural protein. Major integral membrane glycoprotein of the erythrocyte membrane; required for normal flexibility and stability of the erythrocyte membrane and for normal erythrocyte shape via the interactions of its cytoplasmic domain with cytoskeletal proteins, glycolytic enzymes, and hemoglobin. Functions as a transporter that mediates the 1:1 exchange of inorganic anions across the erythrocyte membrane. Mediates chloride-bicarbonate exchange in the kidney, and is required for normal acidification of the urine. The sequence is that of Band 3 anion exchange protein (slc4a1) from Oncorhynchus mykiss (Rainbow trout).